A 258-amino-acid polypeptide reads, in one-letter code: Imidazole glycerol phosphate synthase subunit HisF (258 aa).

Residues Asp-11 and Asp-130 contribute to the active site.

This sequence belongs to the HisA/HisF family. As to quaternary structure, heterodimer of HisH and HisF.

The protein resides in the cytoplasm. The catalysed reaction is 5-[(5-phospho-1-deoxy-D-ribulos-1-ylimino)methylamino]-1-(5-phospho-beta-D-ribosyl)imidazole-4-carboxamide + L-glutamine = D-erythro-1-(imidazol-4-yl)glycerol 3-phosphate + 5-amino-1-(5-phospho-beta-D-ribosyl)imidazole-4-carboxamide + L-glutamate + H(+). The protein operates within amino-acid biosynthesis; L-histidine biosynthesis; L-histidine from 5-phospho-alpha-D-ribose 1-diphosphate: step 5/9. IGPS catalyzes the conversion of PRFAR and glutamine to IGP, AICAR and glutamate. The HisF subunit catalyzes the cyclization activity that produces IGP and AICAR from PRFAR using the ammonia provided by the HisH subunit. The protein is Imidazole glycerol phosphate synthase subunit HisF of Shigella boydii serotype 18 (strain CDC 3083-94 / BS512).